A 98-amino-acid chain; its full sequence is MNLYDVIKKPVITESSMAQLEAGKYVFEVDTRAHKLLIKQAVEAAFEGVKVANVNTINVKPKAKRVGRYTGFTNKTKKAIITLTADSKAIELFAAEAE.

It belongs to the universal ribosomal protein uL23 family. Part of the 50S ribosomal subunit. Contacts protein L29, and trigger factor when it is bound to the ribosome.

One of the early assembly proteins it binds 23S rRNA. One of the proteins that surrounds the polypeptide exit tunnel on the outside of the ribosome. Forms the main docking site for trigger factor binding to the ribosome. In Streptococcus pneumoniae serotype 19F (strain G54), this protein is Large ribosomal subunit protein uL23.